A 311-amino-acid polypeptide reads, in one-letter code: Nod factor export ATP-binding protein I (311 aa).

One can recognise an ABC transporter domain in the interval 13-243 (IDLAGVSKSY…QIGCPVIEIY (231 aa)). ATP is bound at residue 45–52 (GPNGAGKS).

This sequence belongs to the ABC transporter superfamily. Lipooligosaccharide exporter (TC 3.A.1.102) family. In terms of assembly, the complex is composed of two ATP-binding proteins (NodI) and two transmembrane proteins (NodJ).

It is found in the cell inner membrane. In terms of biological role, part of the ABC transporter complex NodIJ involved in the export of the nodulation factors (Nod factors), the bacterial signal molecules that induce symbiosis and subsequent nodulation induction. Nod factors are LCO (lipo-chitin oligosaccharide), a modified beta-1,4-linked N-acetylglucosamine oligosaccharide. This subunit is responsible for energy coupling to the transport system. This Rhizobium johnstonii (strain DSM 114642 / LMG 32736 / 3841) (Rhizobium leguminosarum bv. viciae) protein is Nod factor export ATP-binding protein I.